The sequence spans 145 residues: Photosystem I reaction center subunit XI (145 aa).

3 helical membrane passes run 48–68, 75–95, and 125–145; these read LEIG…LGPL, LLVG…ALTI, and IGAL…SFFA.

This sequence belongs to the PsaL family.

It is found in the plastid. Its subcellular location is the chloroplast thylakoid membrane. In Isochrysis galbana (Marine planktonic alga), this protein is Photosystem I reaction center subunit XI.